A 152-amino-acid chain; its full sequence is Small ribosomal subunit protein bS16 (152 aa).

The interval 84–152 (WKWEASNNPQ…EAAAEEEKSE (69 aa)) is disordered. The segment covering 97-123 (PGQKAKELAAEKAEKEADRKAAEEEAK) has biased composition (basic and acidic residues). The span at 124–144 (AAAAAPAAEEAPAEEAPAAEA) shows a compositional bias: low complexity.

The protein belongs to the bacterial ribosomal protein bS16 family.

The sequence is that of Small ribosomal subunit protein bS16 from Maricaulis maris (strain MCS10) (Caulobacter maris).